Here is a 557-residue protein sequence, read N- to C-terminus: Protein Red (557 aa).

Residues 1–90 form a disordered region; it reads MPERDSEPFS…YAKLRQQEIE (90 aa). Residues 16–25 show a composition bias toward basic and acidic residues; that stretch reads DGHDVDDPHS. A compositionally biased stretch (low complexity) spans 42 to 53; it reads TPRAAPTSAPPS. N6-acetyllysine occurs at positions 98 and 137. K151 is covalently cross-linked (Glycyl lysine isopeptide (Lys-Gly) (interchain with G-Cter in SUMO2)). A disordered region spans residues 181–205; sequence KEKEEEELMEKPQKETKKDEDPENK. S287 bears the Phosphoserine mark. The segment covering 294-303 has biased composition (basic residues); sequence RNKKLKKKDK. The tract at residues 294-402 is disordered; the sequence is RNKKLKKKDK…PMDVDKGPGS (109 aa). Residues 304–313 show a composition bias toward basic and acidic residues; sequence GKLEEKKPPE. Glycyl lysine isopeptide (Lys-Gly) (interchain with G-Cter in SUMO2) cross-links involve residues K310 and K331. Basic and acidic residues predominate over residues 332 to 398; it reads TPRDKERERY…VDDEPMDVDK (67 aa). Tandem repeats lie at residues 342–343, 344–345, 346–347, 348–349, 350–351, 352–353, 354–355, 356–357, 358–359, 360–361, 362–363, 364–365, 366–367, 368–369, 370–371, 372–373, and 374–375. The tract at residues 342-375 is 17 X 2 AA tandem repeats of R-[ED]; the sequence is RERERDRERDRDRERDRERDRERERERDRERERE. Residues K386, K388, K404, and K408 each participate in a glycyl lysine isopeptide (Lys-Gly) (interchain with G-Cter in SUMO2) cross-link. S417 and S460 each carry phosphoserine. Residue T485 is modified to Phosphothreonine. Residues K496, K501, and K509 each participate in a glycyl lysine isopeptide (Lys-Gly) (interchain with G-Cter in SUMO2) cross-link. S536 is subject to Phosphoserine. Glycyl lysine isopeptide (Lys-Gly) (interchain with G-Cter in SUMO2) cross-links involve residues K541, K543, and K553.

This sequence belongs to the RED family. In terms of assembly, component of the spliceosome B complex. Interacts with SMU1. Interacts with MAD1L1. May interact with DHX15. As to expression, ubiquitous.

It localises to the nucleus. The protein resides in the nucleoplasm. The protein localises to the chromosome. It is found in the cytoplasm. Its subcellular location is the cytoskeleton. It localises to the spindle pole. Functionally, involved in pre-mRNA splicing as a component of the spliceosome. Auxiliary spliceosomal protein that regulates selection of alternative splice sites in a small set of target pre-mRNA species. Required for normal mitotic cell cycle progression. Recruits MAD1L1 and MAD2L1 to kinetochores, and is required to trigger the spindle assembly checkpoint. Required for normal accumulation of SMU1. In Mus musculus (Mouse), this protein is Protein Red (Ik).